The sequence spans 529 residues: Bifunctional purine biosynthesis protein PurH (529 aa).

Residues 1–148 enclose the MGS-like domain; the sequence is MQPPRPVRRA…KNHKDVAIVV (148 aa).

The protein belongs to the PurH family.

It catalyses the reaction (6R)-10-formyltetrahydrofolate + 5-amino-1-(5-phospho-beta-D-ribosyl)imidazole-4-carboxamide = 5-formamido-1-(5-phospho-D-ribosyl)imidazole-4-carboxamide + (6S)-5,6,7,8-tetrahydrofolate. The enzyme catalyses IMP + H2O = 5-formamido-1-(5-phospho-D-ribosyl)imidazole-4-carboxamide. It functions in the pathway purine metabolism; IMP biosynthesis via de novo pathway; 5-formamido-1-(5-phospho-D-ribosyl)imidazole-4-carboxamide from 5-amino-1-(5-phospho-D-ribosyl)imidazole-4-carboxamide (10-formyl THF route): step 1/1. It participates in purine metabolism; IMP biosynthesis via de novo pathway; IMP from 5-formamido-1-(5-phospho-D-ribosyl)imidazole-4-carboxamide: step 1/1. This is Bifunctional purine biosynthesis protein PurH from Sodalis glossinidius (strain morsitans).